The chain runs to 372 residues: Glutamine synthetase (372 aa).

Residues 24–103 form the GS beta-grasp domain; the sequence is VIAEYVWVDG…VLAECFNSDG (80 aa). Residues 110–372 form the GS catalytic domain; it reads HRHEANKLFQ…KEYERETNEQ (263 aa).

The protein belongs to the glutamine synthetase family. As to quaternary structure, homooctamer.

The protein resides in the cytoplasm. The catalysed reaction is L-glutamate + NH4(+) + ATP = L-glutamine + ADP + phosphate + H(+). This chain is Glutamine synthetase (GLN1), found in Candida glabrata (strain ATCC 2001 / BCRC 20586 / JCM 3761 / NBRC 0622 / NRRL Y-65 / CBS 138) (Yeast).